We begin with the raw amino-acid sequence, 109 residues long: Class I hydrophobin SC1 (109 aa).

The first 22 residues, 1-22 (MRFSLAILALPVLAAATAVPRG), serve as a signal peptide directing secretion. 4 disulfides stabilise this stretch: Cys-27–Cys-88, Cys-34–Cys-82, Cys-35–Cys-69, and Cys-89–Cys-102.

Belongs to the fungal hydrophobin family. Self-assembles to form functional amyloid fibrils called rodlets. Self-assembly into fibrillar rodlets occurs spontaneously at hydrophobic:hydrophilic interfaces and the rodlets further associate laterally to form amphipathic monolayers.

The protein resides in the secreted. It is found in the cell wall. Its function is as follows. Aerial growth, conidiation, and dispersal of filamentous fungi in the environment rely upon a capability of their secreting small amphipathic proteins called hydrophobins (HPBs) with low sequence identity. Class I can self-assemble into an outermost layer of rodlet bundles on aerial cell surfaces, conferring cellular hydrophobicity that supports fungal growth, development and dispersal; whereas Class II form highly ordered films at water-air interfaces through intermolecular interactions but contribute nothing to the rodlet structure. SC1 is a dikaryon-specific class I hydrophobin that contributes to the formation of aerial hyphae and fruiting bodies. The sequence is that of Class I hydrophobin SC1 from Schizophyllum commune (Split gill fungus).